The chain runs to 944 residues: 2-oxoglutarate dehydrogenase E1 component (944 aa).

Positions 914 to 944 (RRRRSSPAEGDPTVHKKEQERIVSDSLTRKN) are disordered. A compositionally biased stretch (basic and acidic residues) spans 925–936 (PTVHKKEQERIV).

This sequence belongs to the alpha-ketoglutarate dehydrogenase family. As to quaternary structure, homodimer. Part of the 2-oxoglutarate dehydrogenase (OGDH) complex composed of E1 (2-oxoglutarate dehydrogenase), E2 (dihydrolipoamide succinyltransferase) and E3 (dihydrolipoamide dehydrogenase); the complex contains multiple copies of the three enzymatic components (E1, E2 and E3). Thiamine diphosphate serves as cofactor.

The enzyme catalyses N(6)-[(R)-lipoyl]-L-lysyl-[protein] + 2-oxoglutarate + H(+) = N(6)-[(R)-S(8)-succinyldihydrolipoyl]-L-lysyl-[protein] + CO2. E1 component of the 2-oxoglutarate dehydrogenase (OGDH) complex which catalyzes the decarboxylation of 2-oxoglutarate, the first step in the conversion of 2-oxoglutarate to succinyl-CoA and CO(2). The chain is 2-oxoglutarate dehydrogenase E1 component from Bacillus subtilis (strain 168).